The chain runs to 74 residues: ATP synthase subunit 9, mitochondrial (74 aa).

A run of 2 helical transmembrane segments spans residues 12–32 (LATI…AALI) and 50–70 (ILGF…AFLL).

This sequence belongs to the ATPase C chain family. F-type ATPases have 2 components, CF(1) - the catalytic core - and CF(0) - the membrane proton channel. CF(1) has five subunits: alpha(3), beta(3), gamma(1), delta(1), epsilon(1). CF(0) has three main subunits: a, b and c.

It is found in the mitochondrion membrane. Mitochondrial membrane ATP synthase (F(1)F(0) ATP synthase or Complex V) produces ATP from ADP in the presence of a proton gradient across the membrane which is generated by electron transport complexes of the respiratory chain. F-type ATPases consist of two structural domains, F(1) - containing the extramembraneous catalytic core and F(0) - containing the membrane proton channel, linked together by a central stalk and a peripheral stalk. During catalysis, ATP synthesis in the catalytic domain of F(1) is coupled via a rotary mechanism of the central stalk subunits to proton translocation. Part of the complex F(0) domain. A homomeric c-ring of probably 10 subunits is part of the complex rotary element. The protein is ATP synthase subunit 9, mitochondrial of Rhizopus oryzae (Mucormycosis agent).